Consider the following 304-residue polypeptide: Pyridoxal 5'-phosphate synthase subunit PdxS (304 aa).

Aspartate 34 is a binding site for D-ribose 5-phosphate. Lysine 91 serves as the catalytic Schiff-base intermediate with D-ribose 5-phosphate. Glycine 163 lines the D-ribose 5-phosphate pocket. Arginine 175 lines the D-glyceraldehyde 3-phosphate pocket. Residues glycine 224 and 245 to 246 contribute to the D-ribose 5-phosphate site; that span reads GS.

It belongs to the PdxS/SNZ family. In terms of assembly, in the presence of PdxT, forms a dodecamer of heterodimers.

It carries out the reaction aldehydo-D-ribose 5-phosphate + D-glyceraldehyde 3-phosphate + L-glutamine = pyridoxal 5'-phosphate + L-glutamate + phosphate + 3 H2O + H(+). It participates in cofactor biosynthesis; pyridoxal 5'-phosphate biosynthesis. Catalyzes the formation of pyridoxal 5'-phosphate from ribose 5-phosphate (RBP), glyceraldehyde 3-phosphate (G3P) and ammonia. The ammonia is provided by the PdxT subunit. Can also use ribulose 5-phosphate and dihydroxyacetone phosphate as substrates, resulting from enzyme-catalyzed isomerization of RBP and G3P, respectively. The chain is Pyridoxal 5'-phosphate synthase subunit PdxS from Streptomyces avermitilis (strain ATCC 31267 / DSM 46492 / JCM 5070 / NBRC 14893 / NCIMB 12804 / NRRL 8165 / MA-4680).